Reading from the N-terminus, the 277-residue chain is Caspase-3 (277 aa).

Met1 is subject to N-acetylmethionine. 2 consecutive propeptides follow at residues 1 to 9 (MENTENSVD) and 10 to 28 (SKSI…ESMD). At Lys11 the chain carries N6-acetyllysine. Ser26 carries the phosphoserine modification. Residues His121 and Cys163 contribute to the active site. Cys163 carries the S-nitrosocysteine; in inhibited form modification. At Arg207 the chain carries (Microbial infection) ADP-riboxanated arginine.

Belongs to the peptidase C14A family. Heterotetramer that consists of two anti-parallel arranged heterodimers, each one formed by a 17 kDa (p17) and a 12 kDa (p12) subunit. Interacts with BIRC6/bruce. Post-translationally, cleavage by granzyme B, caspase-6, caspase-8 and caspase-10 generates the two active subunits. Additional processing of the propeptides is likely due to the autocatalytic activity of the activated protease. Active heterodimers between the small subunit of caspase-7 protease and the large subunit of caspase-3 also occur and vice versa. S-nitrosylated on its catalytic site cysteine in unstimulated human cell lines and denitrosylated upon activation of the Fas apoptotic pathway, associated with an increase in intracellular caspase activity. Fas therefore activates caspase-3 not only by inducing the cleavage of the caspase zymogen to its active subunits, but also by stimulating the denitrosylation of its active site thiol. In terms of processing, ubiquitinated by BIRC6; this activity is inhibited by DIABLO/SMAC. Post-translationally, (Microbial infection) ADP-riboxanation by C.violaceum CopC blocks CASP3 processing, preventing CASP3 activation and ability to recognize and cleave substrates. As to expression, highly expressed in lung, spleen, heart, liver and kidney. Moderate levels in brain and skeletal muscle, and low in testis. Also found in many cell lines, highest expression in cells of the immune system.

It is found in the cytoplasm. It catalyses the reaction Strict requirement for an Asp residue at positions P1 and P4. It has a preferred cleavage sequence of Asp-Xaa-Xaa-Asp-|- with a hydrophobic amino-acid residue at P2 and a hydrophilic amino-acid residue at P3, although Val or Ala are also accepted at this position.. Inhibited by isatin sulfonamides. Inhibited by BIRC6; following inhibition of BIRC6-caspase binding by DIABLO/SMAC, BIRC6 is subjected to caspase cleavage, leading to an increase in active caspases. Functionally, thiol protease that acts as a major effector caspase involved in the execution phase of apoptosis. Following cleavage and activation by initiator caspases (CASP8, CASP9 and/or CASP10), mediates execution of apoptosis by catalyzing cleavage of many proteins. At the onset of apoptosis, it proteolytically cleaves poly(ADP-ribose) polymerase PARP1 at a '216-Asp-|-Gly-217' bond. Cleaves and activates sterol regulatory element binding proteins (SREBPs) between the basic helix-loop-helix leucine zipper domain and the membrane attachment domain. Cleaves and activates caspase-6, -7 and -9 (CASP6, CASP7 and CASP9, respectively). Cleaves and inactivates interleukin-18 (IL18). Involved in the cleavage of huntingtin. Triggers cell adhesion in sympathetic neurons through RET cleavage. Cleaves and inhibits serine/threonine-protein kinase AKT1 in response to oxidative stress. Acts as an inhibitor of type I interferon production during virus-induced apoptosis by mediating cleavage of antiviral proteins CGAS, IRF3 and MAVS, thereby preventing cytokine overproduction. Also involved in pyroptosis by mediating cleavage and activation of gasdermin-E (GSDME). Cleaves XRCC4 and phospholipid scramblase proteins XKR4, XKR8 and XKR9, leading to promote phosphatidylserine exposure on apoptotic cell surface. Cleaves BIRC6 following inhibition of BIRC6-caspase binding by DIABLO/SMAC. This Homo sapiens (Human) protein is Caspase-3 (CASP3).